The primary structure comprises 149 residues: D-aminoacyl-tRNA deacylase (149 aa).

The Gly-cisPro motif, important for rejection of L-amino acids motif lies at 137–138; it reads GP.

This sequence belongs to the DTD family. In terms of assembly, homodimer.

The protein localises to the cytoplasm. It catalyses the reaction glycyl-tRNA(Ala) + H2O = tRNA(Ala) + glycine + H(+). The catalysed reaction is a D-aminoacyl-tRNA + H2O = a tRNA + a D-alpha-amino acid + H(+). Its function is as follows. An aminoacyl-tRNA editing enzyme that deacylates mischarged D-aminoacyl-tRNAs. Also deacylates mischarged glycyl-tRNA(Ala), protecting cells against glycine mischarging by AlaRS. Acts via tRNA-based rather than protein-based catalysis; rejects L-amino acids rather than detecting D-amino acids in the active site. By recycling D-aminoacyl-tRNA to D-amino acids and free tRNA molecules, this enzyme counteracts the toxicity associated with the formation of D-aminoacyl-tRNA entities in vivo and helps enforce protein L-homochirality. This chain is D-aminoacyl-tRNA deacylase, found in Desulforamulus reducens (strain ATCC BAA-1160 / DSM 100696 / MI-1) (Desulfotomaculum reducens).